The primary structure comprises 249 residues: BPI fold-containing family A member 2 (249 aa).

The N-terminal stretch at Met1–Ser18 is a signal peptide. 2 N-linked (GlcNAc...) asparagine glycosylation sites follow: Asn124 and Asn132. Residues Cys174 and Cys217 are joined by a disulfide bond.

Belongs to the BPI/LBP/Plunc superfamily. Plunc family. As to expression, detected in submandibular gland. Secreted into saliva.

The protein localises to the secreted. In terms of biological role, has strong antibacterial activity against P.aeruginosa. The sequence is that of BPI fold-containing family A member 2 (BPIFA2) from Homo sapiens (Human).